The sequence spans 477 residues: ETS translocation variant 1 (477 aa).

A Phosphoserine modification is found at serine 94. Residues proline 128 to threonine 179 form a disordered region. Serine 191 and serine 216 each carry phosphoserine; by RPS6KA1 and RPS6KA5. Residue lysine 317 forms a Glycyl lysine isopeptide (Lys-Gly) (interchain with G-Cter in SUMO2) linkage. A DNA-binding region (ETS) is located at residues leucine 335–valine 415.

The protein belongs to the ETS family. In terms of processing, sumoylated. Post-translationally, phosphorylated at Ser-191 and Ser-216 by RPS6KA1 and RPS6KA5; phosphorylation activates transcriptional activity. As to expression, abundant in kidney. Moderate levels seen in the heart, brain, lung, embryo and lower levels seen in spleen, intestine, testis and thymus.

The protein localises to the nucleus. In terms of biological role, transcriptional activator that binds to DNA sequences containing the consensus pentanucleotide 5'-CGGA[AT]-3'. Required for olfactory dopaminergic neuron differentiation; may directly activate expression of tyrosine hydroxylase (TH). The chain is ETS translocation variant 1 from Mus musculus (Mouse).